Consider the following 245-residue polypeptide: Eukaryotic translation initiation factor 6 (245 aa).

It belongs to the eIF-6 family. Monomer. Associates with the 60S ribosomal subunit.

It localises to the cytoplasm. The protein localises to the nucleus. It is found in the nucleolus. In terms of biological role, binds to the 60S ribosomal subunit and prevents its association with the 40S ribosomal subunit to form the 80S initiation complex in the cytoplasm. May also be involved in ribosome biogenesis. The protein is Eukaryotic translation initiation factor 6 (eif6) of Xenopus laevis (African clawed frog).